An 869-amino-acid polypeptide reads, in one-letter code: Speckle targeted PIP5K1A-regulated poly(A) polymerase (869 aa).

Residues Phe16 to Leu46 form a Matrin-type zinc finger. In terms of domain architecture, RRM spans Arg56–Gln128. Residues His114–Ser144 are disordered. Residue Ser205 participates in ATP binding. Residues Asp216 and Asp218 each contribute to the Mg(2+) site. UTP-binding residues include Asp216 and Asp218. 2 disordered regions span residues Met226–Ala247 and Cys259–Asp335. Polar residues-rich tracts occupy residues Asp266–Ser276 and Thr283–Asp299. Residues Gln314 to Asp335 show a composition bias toward basic and acidic residues. An ATP-binding site is contributed by Asn395. Residues Asn395, Arg417, Tyr435, and His552 each contribute to the UTP site. Residues Leu494–His552 form the PAP-associated domain. The segment at Ser601–Lys869 is KA1; binds the bulging loops of U6 snRNA but is dispensable for terminal uridylyltransferase activity. 4 disordered regions span residues Gln640 to Glu689, Met735 to Ser757, Ala775 to Glu796, and Arg803 to Pro822. Residues Lys671 to Glu689 are compositionally biased toward basic and acidic residues. A phosphoserine mark is found at Ser688 and Ser744.

It belongs to the DNA polymerase type-B-like family. As to quaternary structure, associates with the cleavage and polyadenylation specificity factor (CPSF) complex. Interacts with CPSF1 and CPSF3; the interaction is direct. Interacts with PIP5K1A. It depends on Mg(2+) as a cofactor. Mn(2+) serves as cofactor. Post-translationally, phosphorylated by CK1 in the proline-rich (Pro-rich) region.

Its subcellular location is the nucleus. It is found in the nucleolus. It localises to the nucleus speckle. It carries out the reaction RNA(n) + UTP = RNA(n)-3'-uridine ribonucleotide + diphosphate. The catalysed reaction is RNA(n) + ATP = RNA(n)-3'-adenine ribonucleotide + diphosphate. With respect to regulation, adenylyltransferase activity is specifically phosphatidylinositol 4,5-bisphosphate (PtdIns(4,5)P2). Functionally, poly(A) polymerase that creates the 3'-poly(A) tail of specific pre-mRNAs. Localizes to nuclear speckles together with PIP5K1A and mediates polyadenylation of a select set of mRNAs, such as HMOX1. In addition to polyadenylation, it is also required for the 3'-end cleavage of pre-mRNAs: binds to the 3'UTR of targeted pre-mRNAs and promotes the recruitment and assembly of the CPSF complex on the 3'UTR of pre-mRNAs. In addition to adenylyltransferase activity, also has uridylyltransferase activity. However, the ATP ratio is higher than UTP in cells, suggesting that it functions primarily as a poly(A) polymerase. Acts as a specific terminal uridylyltransferase for U6 snRNA in vitro: responsible for a controlled elongation reaction that results in the restoration of the four 3'-terminal UMP-residues found in newly transcribed U6 snRNA. Not involved in replication-dependent histone mRNA degradation. This Mus musculus (Mouse) protein is Speckle targeted PIP5K1A-regulated poly(A) polymerase (Tut1).